We begin with the raw amino-acid sequence, 711 residues long: Transferrin-binding protein B (711 aa).

The first 20 residues, methionine 1–alanine 20, serve as a signal peptide directing secretion. Cysteine 21 carries the N-palmitoyl cysteine lipid modification. Cysteine 21 is lipidated: S-diacylglycerol cysteine. 7 disordered regions span residues valine 33 to glutamine 58, serine 79 to lysine 105, aspartate 118 to alanine 146, serine 225 to leucine 251, leucine 370 to serine 396, proline 437 to asparagine 492, and threonine 682 to glutamine 711. Over residues aspartate 46–lysine 56 the composition is skewed to polar residues. A compositionally biased stretch (basic and acidic residues) spans lysine 96–lysine 105. Polar residues predominate over residues isoleucine 119–alanine 146. Low complexity predominate over residues glycine 373 to serine 393. A compositionally biased stretch (basic and acidic residues) spans phenylalanine 457–alanine 472. Polar residues-rich tracts occupy residues alanine 474–asparagine 492 and lysine 684–threonine 699.

The protein belongs to the TbpB family. Isotype II subfamily. Binds only human holo-transferrin (TF), via the TF C-terminus. Forms a large complex with TbpA and TF. Interacts via its C-terminal domain with Slam1.

It is found in the cell outer membrane. The protein resides in the cell surface. Neisseria acquires iron by extracting it from serum transferrin (TF) in its human host. Acts as a TF receptor and is required for TF utilization. Involved in the initial capture of TF. Helps select only those TF molecules that can be used as an iron source and concentrates them on the cell surface, maintaining the iron-loaded status of the TF C-terminal lobe until its delivery to TbpA. The protein is Transferrin-binding protein B (tbpB) of Neisseria meningitidis serogroup B.